Here is a 452-residue protein sequence, read N- to C-terminus: Tryptophan biosynthesis protein TrpCF (452 aa).

The tract at residues 1–256 (MQTVLAKIVA…AAVRRVLLGE (256 aa)) is indole-3-glycerol phosphate synthase. Positions 257 to 452 (NKVCGLTRAQ…ASVFQTLRAY (196 aa)) are N-(5'-phosphoribosyl)anthranilate isomerase.

It in the N-terminal section; belongs to the TrpC family. In the C-terminal section; belongs to the TrpF family. Monomer.

It carries out the reaction N-(5-phospho-beta-D-ribosyl)anthranilate = 1-(2-carboxyphenylamino)-1-deoxy-D-ribulose 5-phosphate. The catalysed reaction is 1-(2-carboxyphenylamino)-1-deoxy-D-ribulose 5-phosphate + H(+) = (1S,2R)-1-C-(indol-3-yl)glycerol 3-phosphate + CO2 + H2O. The protein operates within amino-acid biosynthesis; L-tryptophan biosynthesis; L-tryptophan from chorismate: step 3/5. It functions in the pathway amino-acid biosynthesis; L-tryptophan biosynthesis; L-tryptophan from chorismate: step 4/5. Its function is as follows. Bifunctional enzyme that catalyzes two sequential steps of tryptophan biosynthetic pathway. The first reaction is catalyzed by the isomerase, coded by the TrpF domain; the second reaction is catalyzed by the synthase, coded by the TrpC domain. The polypeptide is Tryptophan biosynthesis protein TrpCF (trpC) (Salmonella typhi).